Reading from the N-terminus, the 576-residue chain is MAGUK p55 subfamily member 2 (576 aa).

L27 domains follow at residues 8 to 60 (SETA…FMQQ) and 84 to 142 (LEAV…YETP). The residue at position 42 (S42) is a Phosphoserine. A Phosphothreonine modification is found at T141. S145 carries the post-translational modification Phosphoserine. One can recognise a PDZ domain in the interval 185-240 (ELVIARILHGGMVAQQGLLHVGDIIKEVNGQPVGSDPRALQELLRNASGSVILKIL). Residues 249–317 (PRQVFVKCHF…PSQLLEEKRK (69 aa)) form the SH3 domain. The 188-residue stretch at 374-561 (RKTLVLIGAQ…TFRELQTAME (188 aa)) folds into the Guanylate kinase-like domain.

It belongs to the MAGUK family. In terms of assembly, can homomultimerise. Interacts with CACNG2. Interacts (via the SH3-Guanylate kinase-like sub-module) with DLG4/PSD95 and DLGAP1/GKAP. Interacts (via the PDZ domain) with CADM1 (via C-terminus). Interacts with KCNN2/SK2 (via N-terminal domain). Interacts with SRC. Post-translationally, phosphorylated by SRC.

The protein resides in the cytoplasm. The protein localises to the cytoskeleton. It localises to the membrane. Its subcellular location is the cell projection. It is found in the dendrite. The protein resides in the postsynaptic density. Functionally, postsynaptic MAGUK scaffold protein that links CADM1 cell adhesion molecules to core components of the postsynaptic density. In CA1 pyramidal neurons, required for synaptic KCNN2-containing channel function and long-term potentiation expression. Seems to negatively regulate SRC function in epithelial cells. In Homo sapiens (Human), this protein is MAGUK p55 subfamily member 2.